We begin with the raw amino-acid sequence, 205 residues long: Urease accessory protein UreG (205 aa).

A GTP-binding site is contributed by Gly14–Thr21.

Belongs to the SIMIBI class G3E GTPase family. UreG subfamily. Homodimer. UreD, UreF and UreG form a complex that acts as a GTP-hydrolysis-dependent molecular chaperone, activating the urease apoprotein by helping to assemble the nickel containing metallocenter of UreC. The UreE protein probably delivers the nickel.

Its subcellular location is the cytoplasm. Functionally, facilitates the functional incorporation of the urease nickel metallocenter. This process requires GTP hydrolysis, probably effectuated by UreG. The chain is Urease accessory protein UreG from Proteus mirabilis (strain HI4320).